A 235-amino-acid chain; its full sequence is Secretory carrier-associated membrane protein 5A (235 aa).

At 1–39 (MSDKPNNFPPLPRFIPLKPCFYQDFDTDIPDLHRTTAKR) the chain is on the cytoplasmic side. A helical membrane pass occupies residues 40 to 60 (LYYLWMLNSITLGVNLIGCLA). The Extracellular portion of the chain corresponds to 61–67 (WLIGGGS). Residues 68–88 (ATNFGLAFLWLILFTPCSYVC) form a helical membrane-spanning segment. Topologically, residues 89–102 (WFRPIYKAFKTDSS) are cytoplasmic. The helical transmembrane segment at 103 to 125 (FNFMAFFFTFTAQLVISIIQAVG) threads the bilayer. Residues 126 to 148 (IPGWGVCGWIASISFFGTNVGSA) are Extracellular-facing. The helical transmembrane segment at 149-169 (VVMLIPTIMFTAVAVLSFVAL) threads the bilayer. The Cytoplasmic portion of the chain corresponds to 170–235 (TKVHRFYRGA…TPNYGYSNEM (66 aa)).

The protein belongs to the SCAMP family. SCAMP5 subfamily.

The protein resides in the cell membrane. It localises to the golgi apparatus membrane. The protein localises to the golgi apparatus. It is found in the trans-Golgi network membrane. Its subcellular location is the recycling endosome membrane. The protein resides in the cytoplasmic vesicle. It localises to the secretory vesicle. The protein localises to the synaptic vesicle membrane. In terms of biological role, required for the calcium-dependent exocytosis of signal sequence-containing cytokines. Probably acts in cooperation with the SNARE machinery. In Xenopus laevis (African clawed frog), this protein is Secretory carrier-associated membrane protein 5A (scamp5-a).